The following is a 1849-amino-acid chain: Mitogen-activated protein kinase kinase kinase mkh1 (1849 aa).

Residues 1556–1825 (WFKGQLIGKG…TKLLAEHPFC (270 aa)) form the Protein kinase domain. Residues 1562-1570 (IGKGTYGRV) and Lys-1585 each bind ATP. Asp-1686 (proton acceptor) is an active-site residue.

This sequence belongs to the protein kinase superfamily. STE Ser/Thr protein kinase family. MAP kinase kinase kinase subfamily.

The catalysed reaction is L-seryl-[protein] + ATP = O-phospho-L-seryl-[protein] + ADP + H(+). It catalyses the reaction L-threonyl-[protein] + ATP = O-phospho-L-threonyl-[protein] + ADP + H(+). In terms of biological role, mitogen-activated protein kinase kinase kinase, part of the mkh1-mkk1-spm1 MAPK cascade that regulates vegetative growth, conidial formation, colony surface hydrophobicity, osmotic stress, cell wall integrity maintenance, carbon and nitrogen source utilization, chitin distribution, septa formation, and pathogenicity. The chain is Mitogen-activated protein kinase kinase kinase mkh1 from Cytospora mali (Apple Valsa canker fungus).